A 611-amino-acid chain; its full sequence is MNYRIDFAVLSEHPQFCRFGLTLHNLSDQDLKAWSLHFTIDRYIQPDSISHSQIHQVGSFCSLTPEQDVINSNSHFYCEFSIKTAPFPFHYYTDGIKAAFVQINDVEPRVRHDVIVTPIALASPYRERSEIPATDAATLSLLPKPNHIERLDGEFALTAGSQISLQSSCAETAATWLKQELTHLYQWQPHDIGSADIVLRTNPTLDEGAYLLSVDRKPIRLEASSHIGFVHASATLLQLVRPDGDNLLVPHIVIKDAPRFKYRGMMLDCARHFHPLERVKRLINQLAHYKFNTFHWHLTDDEGWRIEIKSLPQLTDIGAWRGVDEVLEPQYSLLTEKHGGFYTQEEIREVIAYAAERGITVIPEIDIPGHSRAAIKALPEWLFDEDDQSQYRSIQYYNDNVLSPALPGTYRFLDCVLEEVAALFPSHFIHIGADEVPDGVWVNSPKCQALMAEEGYTDAKELQGHLLRYAEKKLKSLGKRMVGWEEAQHGDKVSKDTVIYSWLSEQAALNCARQGFDVILQPGQFTYLDIAQDYAPEEPGVDWAGVTPLERAYRYEPLVEVPEHDPLRKRILGIQCALWCELVNNQDRMDYMIYPRLTALAGSGLDTKIPA.

It belongs to the glycosyl hydrolase 20 family. As to quaternary structure, homodimer.

The protein resides in the periplasm. It carries out the reaction Hydrolysis of terminal non-reducing N-acetyl-D-hexosamine residues in N-acetyl-beta-D-hexosaminides.. Its pathway is glycan degradation; chitin degradation. With respect to regulation, inhibited by mercuric ions, PNP-beta-Glc, PNP-beta-Gal, PNP-alpha-GlcNAc, and PNP-beta-S-GlcNAc. Its function is as follows. Hydrolyzes aryl-N-acetyl-beta-D-glucosaminide (aryl-beta-GlcNAc), aryl-beta-GalNAc and chitin oligosaccharides. Can hydrolyze rapidly the artificial substrates p-nitrophenyl-N-acetyl-beta-D-glucosaminide (PNP-beta-GlcNAc) and 4-methylumbelliferyl-beta-GlcNAc, and is slightly active on p-nitrophenyl-beta-GalNAc. This enzyme is not processive, i.e. when it hydrolyzes (GlcNAc)n, both products, (Glc-NAc)n-1 and the terminal GlcNAc, are released before the enzyme attacks a second molecule of (GlcNAc)n or (GlcNAc)n-1. This is Beta-hexosaminidase from Vibrio furnissii.